A 323-amino-acid polypeptide reads, in one-letter code: Sphingolipid delta(4)-desaturase DES1 (323 aa).

The next 2 helical transmembrane spans lie at 41 to 61 (YNLIWVVMLMVAAQLTAFYLV) and 68 to 88 (WVVFWAYVFGSCISHSMTLAI). A Histidine box-1 motif is present at residues 89–93 (HEISH). Residues 102-122 (AMWNRWFGIFANLPLGLPYSI) form a helical membrane-spanning segment. Positions 128–132 (HMDHH) match the Histidine box-2 motif. The next 3 membrane-spanning stretches (helical) occupy residues 159–179 (KFIWIVLQPFFYAIRPLCINP), 185–205 (LEIINLLAQLFFDIVIYYLWG), and 209–229 (IFYMLAGSVLGLGLHPISGHF). A Histidine box-3 motif is present at residues 259 to 263 (HNEHH).

The protein belongs to the fatty acid desaturase type 1 family. DEGS subfamily. Interacts with RLBP1; the interaction increases synthesis of chromophore-precursors by DEGS1. In terms of tissue distribution, expressed in retina and retinal pigment epithelium by Mueller cells (at protein level).

It is found in the endoplasmic reticulum membrane. It catalyses the reaction an N-acylsphinganine + 2 Fe(II)-[cytochrome b5] + O2 + 2 H(+) = an N-acylsphing-4-enine + 2 Fe(III)-[cytochrome b5] + 2 H2O. The catalysed reaction is all-trans-retinol = 11-cis-retinol. The enzyme catalyses all-trans-retinol = 9-cis-retinol. It carries out the reaction all-trans-retinol = 13-cis-retinol. It catalyses the reaction 11-cis-retinol = 13-cis-retinol. The catalysed reaction is 11-cis-retinol = 9-cis-retinol. Functionally, has sphingolipid-delta-4-desaturase activity. Converts D-erythro-sphinganine to D-erythro-sphingosine (E-sphing-4-enine). Catalyzes the equilibrium isomerization of retinols. The chain is Sphingolipid delta(4)-desaturase DES1 (DEGS1) from Gallus gallus (Chicken).